A 284-amino-acid polypeptide reads, in one-letter code: L-ribulose-5-phosphate 3-epimerase UlaE (284 aa).

The protein belongs to the L-ribulose-5-phosphate 3-epimerase family.

It carries out the reaction L-ribulose 5-phosphate = L-xylulose 5-phosphate. Its pathway is cofactor degradation; L-ascorbate degradation; D-xylulose 5-phosphate from L-ascorbate: step 3/4. Functionally, catalyzes the isomerization of L-xylulose-5-phosphate to L-ribulose-5-phosphate. Is involved in the anaerobic L-ascorbate utilization. This Escherichia coli O8 (strain IAI1) protein is L-ribulose-5-phosphate 3-epimerase UlaE.